Reading from the N-terminus, the 1385-residue chain is L-2-aminoadipate reductase large subunit (1385 aa).

The Carrier domain maps to 843-920; that stretch reads SSFSPLEQEI…ELAKEISRVR (78 aa). O-(pantetheine 4'-phosphoryl)serine is present on Ser880.

This sequence belongs to the ATP-dependent AMP-binding enzyme family. Heterodimer of an alpha and a beta subunit. It depends on pantetheine 4'-phosphate as a cofactor.

It carries out the reaction (S)-2-amino-6-oxohexanoate + NADP(+) + H2O = L-2-aminoadipate + NADPH + 2 H(+). It catalyses the reaction (S)-2-amino-6-oxohexanoate + NAD(+) + H2O = L-2-aminoadipate + NADH + 2 H(+). The catalysed reaction is (S)-2-amino-6-oxohexanoate + AMP + diphosphate + NADP(+) = L-2-aminoadipate + ATP + NADPH + H(+). The protein operates within amino-acid biosynthesis; L-lysine biosynthesis via AAA pathway; L-lysine from L-alpha-aminoadipate (fungal route): step 1/3. In terms of biological role, catalyzes the activation of alpha-aminoadipate by ATP-dependent adenylation and the reduction of activated alpha-aminoadipate by NADPH. The activated alpha-aminoadipate is bound to the phosphopantheinyl group of the enzyme itself before it is reduced to (S)-2-amino-6-oxohexanoate. This Eremothecium gossypii (strain ATCC 10895 / CBS 109.51 / FGSC 9923 / NRRL Y-1056) (Yeast) protein is L-2-aminoadipate reductase large subunit (LYS2).